Reading from the N-terminus, the 217-residue chain is MSDPIWKSRIIPAEQALPGRADALSPTTSHAITGREIKADTPEGMQEIFLGLGCFWGAERLFWETDGVWHTAVGYGGGTTPNPTYQETCSGATGHAELVRVVFDPEMLSLDQVLKIFWEGHDPTQGMRQGNDRGTQYRSAIYATTPEQLVAAHDAAARYQAELDGAGLGTITTEIVKAGPFYYAEDEHQQYLARNPSGYCGIGGTGVVCPIGRHAPT.

Cys-54 is a catalytic residue.

This sequence belongs to the MsrA Met sulfoxide reductase family.

It catalyses the reaction L-methionyl-[protein] + [thioredoxin]-disulfide + H2O = L-methionyl-(S)-S-oxide-[protein] + [thioredoxin]-dithiol. It carries out the reaction [thioredoxin]-disulfide + L-methionine + H2O = L-methionine (S)-S-oxide + [thioredoxin]-dithiol. Its function is as follows. Has an important function as a repair enzyme for proteins that have been inactivated by oxidation. Catalyzes the reversible oxidation-reduction of methionine sulfoxide in proteins to methionine. The polypeptide is Peptide methionine sulfoxide reductase MsrA (Maricaulis maris (strain MCS10) (Caulobacter maris)).